The following is a 255-amino-acid chain: tRNA (guanine-N(7)-)-methyltransferase (255 aa).

Residues 1 to 21 (MMHDDPNEAGLPPHDDAIPDE) form a disordered region. S-adenosyl-L-methionine-binding residues include glutamate 86, glutamate 111, aspartate 138, and aspartate 161. Residue aspartate 161 is part of the active site. Residues lysine 165, aspartate 197, and 232 to 235 (TKFE) each bind substrate.

This sequence belongs to the class I-like SAM-binding methyltransferase superfamily. TrmB family.

It catalyses the reaction guanosine(46) in tRNA + S-adenosyl-L-methionine = N(7)-methylguanosine(46) in tRNA + S-adenosyl-L-homocysteine. It participates in tRNA modification; N(7)-methylguanine-tRNA biosynthesis. Functionally, catalyzes the formation of N(7)-methylguanine at position 46 (m7G46) in tRNA. This chain is tRNA (guanine-N(7)-)-methyltransferase, found in Burkholderia lata (strain ATCC 17760 / DSM 23089 / LMG 22485 / NCIMB 9086 / R18194 / 383).